The following is an 834-amino-acid chain: Protein SEY1 (834 aa).

Residues 1–26 form a disordered region; that stretch reads MSNVPSPTVTLEGDSPDAAHEAVSSS. Residues 1-733 lie on the Cytoplasmic side of the membrane; sequence MSNVPSPTVT…KRSIMQHVTQ (733 aa). The 234-residue stretch at 63–296 folds into the GB1/RHD3-type G domain; the sequence is PGDYRIISVF…SESFLFKPNY (234 aa). GTP is bound at residue 73 to 80; it reads GSQSTGKS. A coiled-coil region spans residues 659 to 688; sequence VRDKKLKRQYETVREEKEAEEEDEDEWDSE. The disordered stretch occupies residues 670 to 689; that stretch reads TVREEKEAEEEDEDEWDSED. Acidic residues predominate over residues 676-689; it reads EAEEEDEDEWDSED. Residues 734–754 form a helical membrane-spanning segment; the sequence is IPYYIYIVILVLGWNEFMAIL. Residues 755 to 757 lie on the Lumenal side of the membrane; the sequence is RNP. Residues 758–778 form a helical membrane-spanning segment; it reads FFFTLLIMLAGATYVMYSMNL. The Cytoplasmic segment spans residues 779–834; sequence LGPASIVVQRMANEALGLAKEKLREFVVDDHMQHGHNMKKMTTNDIELDDLSEEST.

It belongs to the TRAFAC class dynamin-like GTPase superfamily. GB1/RHD3 GTPase family. RHD3 subfamily.

It is found in the endoplasmic reticulum membrane. Functionally, cooperates with the reticulon proteins and tubule-shaping DP1 family proteins to generate and maintain the structure of the tubular endoplasmic reticulum network. Has GTPase activity, which is required for its function in ER organization. The polypeptide is Protein SEY1 (Clavispora lusitaniae (strain ATCC 42720) (Yeast)).